A 452-amino-acid polypeptide reads, in one-letter code: Exodeoxyribonuclease 7 large subunit (452 aa).

It belongs to the XseA family. Heterooligomer composed of large and small subunits.

It localises to the cytoplasm. The catalysed reaction is Exonucleolytic cleavage in either 5'- to 3'- or 3'- to 5'-direction to yield nucleoside 5'-phosphates.. In terms of biological role, bidirectionally degrades single-stranded DNA into large acid-insoluble oligonucleotides, which are then degraded further into small acid-soluble oligonucleotides. In Bacillus mycoides (strain KBAB4) (Bacillus weihenstephanensis), this protein is Exodeoxyribonuclease 7 large subunit.